Consider the following 611-residue polypeptide: Polyphenol oxidase 4 (611 aa).

Residues H57, H82, H91, H251, H255, and H283 each coordinate Cu cation. Positions 80–82 (CTH) form a cross-link, 2'-(S-cysteinyl)-histidine (Cys-His). Position 255 (H255) interacts with substrate. Residues 380–611 (IKKSEGGKNP…GGLGALGRIF (232 aa)) constitute a propeptide, removed in mature form.

This sequence belongs to the tyrosinase family. Heterotetramer. Requires Cu(2+) as cofactor. Post-translationally, the C-ter is probably cleaved after Gly-379 since the mature active protein is smaller than the protein encoded by the gene.

The enzyme catalyses 2 L-dopa + O2 = 2 L-dopaquinone + 2 H2O. It catalyses the reaction L-tyrosine + O2 = L-dopaquinone + H2O. Its function is as follows. Copper-containing oxidase that catalyzes both the o-hydroxylation of monophenols and the subsequent oxidation of the resulting o-diphenols into reactive o-quinones, which evolve spontaneously to produce intermediates, which associate in dark brown pigments. Involved in the initial step of melanin synthesis. Melanins constitute a mechanism of defense and resistance to stress such as UV radiations, free radicals, gamma rays, dehydratation and extreme temperatures, and contribute to the fungal cell-wall resistance against hydrolytic enzymes in avoiding cellular lysis. Fungal pigments are also involved in the formation and stability of spores. The protein is Polyphenol oxidase 4 (PPO4) of Agaricus bisporus (White button mushroom).